The following is a 259-amino-acid chain: Hydroxyacylglutathione hydrolase (259 aa).

7 residues coordinate Zn(2+): His-56, His-58, Asp-60, His-61, His-112, Asp-133, and His-171.

This sequence belongs to the metallo-beta-lactamase superfamily. Glyoxalase II family. Monomer. The cofactor is Zn(2+).

The catalysed reaction is an S-(2-hydroxyacyl)glutathione + H2O = a 2-hydroxy carboxylate + glutathione + H(+). Its pathway is secondary metabolite metabolism; methylglyoxal degradation; (R)-lactate from methylglyoxal: step 2/2. Its function is as follows. Thiolesterase that catalyzes the hydrolysis of S-D-lactoyl-glutathione to form glutathione and D-lactic acid. This Pseudomonas putida (strain ATCC 700007 / DSM 6899 / JCM 31910 / BCRC 17059 / LMG 24140 / F1) protein is Hydroxyacylglutathione hydrolase.